The primary structure comprises 236 residues: Aspartate/glutamate leucyltransferase (236 aa).

It belongs to the R-transferase family. Bpt subfamily.

It localises to the cytoplasm. It carries out the reaction N-terminal L-glutamyl-[protein] + L-leucyl-tRNA(Leu) = N-terminal L-leucyl-L-glutamyl-[protein] + tRNA(Leu) + H(+). It catalyses the reaction N-terminal L-aspartyl-[protein] + L-leucyl-tRNA(Leu) = N-terminal L-leucyl-L-aspartyl-[protein] + tRNA(Leu) + H(+). Functions in the N-end rule pathway of protein degradation where it conjugates Leu from its aminoacyl-tRNA to the N-termini of proteins containing an N-terminal aspartate or glutamate. This Saccharophagus degradans (strain 2-40 / ATCC 43961 / DSM 17024) protein is Aspartate/glutamate leucyltransferase.